The primary structure comprises 470 residues: BTB/POZ domain-containing protein 17 (470 aa).

The N-terminal stretch at 1 to 18 (MRMKGLYVVPLLLALVES) is a signal peptide. The BTB domain occupies 53–122 (SDTTLRIRTA…FYCGEISVNL (70 aa)). One can recognise a BACK domain in the interval 161 to 261 (VVSWYHYALR…ITPSQLFQIQ (101 aa)).

It localises to the secreted. The protein is BTB/POZ domain-containing protein 17 (btbd17) of Xenopus laevis (African clawed frog).